The chain runs to 372 residues: Solute carrier family 35 member F6 (372 aa).

The signal sequence occupies residues 1–18; the sequence is MAWTKYQLFLAGLMLVTG. A run of 2 helical transmembrane segments spans residues 48 to 68 and 89 to 109; these read FVQA…FYLL and LLFL…YVAL. The 56-residue stretch at 105–160 folds into the EamA domain; the sequence is MYVALNMTSASSFQMLRGAVIIFTGLFSVAFLDRRLAPSQWLGILITIAGLVVVGL. Asn-110 is a glycosylation site (N-linked (GlcNAc...) asparagine). 7 helical membrane-spanning segments follow: residues 116–136, 145–165, 176–196, 211–231, 261–281, 293–312, and 320–336; these read SFQM…VAFL, WLGI…DLLS, VITG…QMVL, AVGI…VPMF, LIAL…FSGI, MVLD…ALGW, and ILGF…YNGL. Thr-366 bears the Phosphothreonine mark.

Belongs to the SLC35F solute transporter family. Interacts with SLC25A5.

It localises to the mitochondrion. It is found in the lysosome membrane. Its function is as follows. Involved in the maintenance of mitochondrial membrane potential in pancreatic ductal adenocarcinoma (PDAC) cells. Promotes pancreatic ductal adenocarcinoma (PDAC) cell growth. May play a role as a nucleotide-sugar transporter. The polypeptide is Solute carrier family 35 member F6 (Slc35f6) (Mus musculus (Mouse)).